Consider the following 255-residue polypeptide: MVPWLGPDDPFPSVERALGAASGAPGLLAASADLLPSRLIDAYRRGIFPWYSDGQPVLWWSPDPRMILVPAEFRISATFRKTLKRVLREPRWEIRVDCDFAGVMRACAQAPRRGQRGTWITAEIIDAYSSLHRAGDAHSIETWLDGRRVGGLYGVSFGRMFFGESMYAHASDASKIALAALVAHLREHRVEMIDCQQNTSHLASLGGREIARKTFVAHVRRAVAEPPIPWRFDKRVVAGLLGQAASATAADAFDR.

This sequence belongs to the L/F-transferase family.

Its subcellular location is the cytoplasm. The enzyme catalyses N-terminal L-lysyl-[protein] + L-leucyl-tRNA(Leu) = N-terminal L-leucyl-L-lysyl-[protein] + tRNA(Leu) + H(+). It catalyses the reaction N-terminal L-arginyl-[protein] + L-leucyl-tRNA(Leu) = N-terminal L-leucyl-L-arginyl-[protein] + tRNA(Leu) + H(+). It carries out the reaction L-phenylalanyl-tRNA(Phe) + an N-terminal L-alpha-aminoacyl-[protein] = an N-terminal L-phenylalanyl-L-alpha-aminoacyl-[protein] + tRNA(Phe). In terms of biological role, functions in the N-end rule pathway of protein degradation where it conjugates Leu, Phe and, less efficiently, Met from aminoacyl-tRNAs to the N-termini of proteins containing an N-terminal arginine or lysine. This chain is Leucyl/phenylalanyl-tRNA--protein transferase, found in Burkholderia pseudomallei (strain 1106a).